Reading from the N-terminus, the 333-residue chain is Electron transfer flavoprotein subunit alpha, mitochondrial (333 aa).

The N-terminal 19 residues, Met1–Phe19, are a transit peptide targeting the mitochondrion. The domain I stretch occupies residues Gln20–Leu204. Lys59 bears the N6-acetyllysine; alternate mark. Residue Lys59 is modified to N6-succinyllysine; alternate. At Lys62 the chain carries N6-acetyllysine. Position 69 is an N6-acetyllysine; alternate (Lys69). Lys69 is modified (N6-succinyllysine; alternate). Lys75 bears the N6-acetyllysine mark. The residue at position 85 (Lys85) is an N6-acetyllysine; alternate. N6-succinyllysine; alternate is present on Lys85. The residue at position 93 (Thr93) is a Phosphothreonine. 2 positions are modified to N6-acetyllysine: Lys101 and Lys139. At Ser140 the chain carries Phosphoserine. Position 158 is an N6-acetyllysine; alternate (Lys158). Lys158 is modified (N6-succinyllysine; alternate). The residue at position 164 (Lys164) is an N6-acetyllysine. N6-succinyllysine is present on Lys187. Position 203 is an N6-acetyllysine; alternate (Lys203). Residue Lys203 is modified to N6-succinyllysine; alternate. Residues Thr205–Lys333 form a domain II region. The residue at position 216 (Lys216) is an N6-succinyllysine. Arg223 is an FAD binding site. 2 positions are modified to N6-acetyllysine; alternate: Lys226 and Lys232. Lys226 and Lys232 each carry N6-succinyllysine; alternate. FAD is bound by residues Ser248, Val263–Thr266, Ser281–His286, and Asn300. Lys301 bears the N6-succinyllysine mark. Asp318 to Leu319 is a binding site for FAD.

It belongs to the ETF alpha-subunit/FixB family. Heterodimer composed of ETFA and ETFB. Identified in a complex that contains ETFA, ETFB and ETFRF1. Interaction with ETFRF1 promotes dissociation of the bound FAD and loss of electron transfer activity. Interacts with TASOR. FAD is required as a cofactor.

Its subcellular location is the mitochondrion matrix. In terms of biological role, heterodimeric electron transfer flavoprotein that accepts electrons from several mitochondrial dehydrogenases, including acyl-CoA dehydrogenases, glutaryl-CoA and sarcosine dehydrogenase. It transfers the electrons to the main mitochondrial respiratory chain via ETF-ubiquinone oxidoreductase (ETF dehydrogenase). Required for normal mitochondrial fatty acid oxidation and normal amino acid metabolism. The sequence is that of Electron transfer flavoprotein subunit alpha, mitochondrial (ETFA) from Bos taurus (Bovine).